We begin with the raw amino-acid sequence, 126 residues long: UPF0102 protein PMT_0624 (126 aa).

It belongs to the UPF0102 family.

This Prochlorococcus marinus (strain MIT 9313) protein is UPF0102 protein PMT_0624.